Consider the following 266-residue polypeptide: Ribonuclease 3 (266 aa).

An RNase III domain is found at 8–130; sequence LARLTKKLGY…IIGAVYLDSN (123 aa). Position 43 (E43) interacts with Mg(2+). Residue D47 is part of the active site. Mg(2+) contacts are provided by D116 and E119. E119 is a catalytic residue. The region spanning 157–227 is the DRBM domain; it reads DPKTRLQEFL…AQQILALIEK (71 aa). Residues 229 to 266 are disordered; it reads REQEKEVKIKPTKQAKLANPRHTKSNPSSSSKKSSTRK. Positions 253–266 are enriched in low complexity; the sequence is SNPSSSSKKSSTRK.

Belongs to the ribonuclease III family. In terms of assembly, homodimer. It depends on Mg(2+) as a cofactor.

The protein resides in the cytoplasm. The enzyme catalyses Endonucleolytic cleavage to 5'-phosphomonoester.. In terms of biological role, digests double-stranded RNA. Involved in the processing of primary rRNA transcript to yield the immediate precursors to the large and small rRNAs (23S and 16S). Processes some mRNAs, and tRNAs when they are encoded in the rRNA operon. Processes pre-crRNA and tracrRNA of type II CRISPR loci if present in the organism. The protein is Ribonuclease 3 of Colwellia psychrerythraea (strain 34H / ATCC BAA-681) (Vibrio psychroerythus).